We begin with the raw amino-acid sequence, 285 residues long: ATP phosphoribosyltransferase (285 aa).

This sequence belongs to the ATP phosphoribosyltransferase family. Long subfamily. Mg(2+) serves as cofactor.

Its subcellular location is the cytoplasm. The catalysed reaction is 1-(5-phospho-beta-D-ribosyl)-ATP + diphosphate = 5-phospho-alpha-D-ribose 1-diphosphate + ATP. The protein operates within amino-acid biosynthesis; L-histidine biosynthesis; L-histidine from 5-phospho-alpha-D-ribose 1-diphosphate: step 1/9. Feedback inhibited by histidine. In terms of biological role, catalyzes the condensation of ATP and 5-phosphoribose 1-diphosphate to form N'-(5'-phosphoribosyl)-ATP (PR-ATP). Has a crucial role in the pathway because the rate of histidine biosynthesis seems to be controlled primarily by regulation of HisG enzymatic activity. The chain is ATP phosphoribosyltransferase from Methanocella arvoryzae (strain DSM 22066 / NBRC 105507 / MRE50).